Reading from the N-terminus, the 127-residue chain is Histone H2A (127 aa).

The span at 1 to 20 (MSGRGKGGKAKTGGKAKSRS) shows a compositional bias: basic residues. A disordered region spans residues 1-23 (MSGRGKGGKAKTGGKAKSRSSRA). S2 is modified (N-acetylserine). S2 is subject to Phosphoserine. Residues K6, K9, and K11 each carry the N6-acetyllysine; partial modification. Q106 carries the post-translational modification N5-methylglutamine. K121 participates in a covalent cross-link: Glycyl lysine isopeptide (Lys-Gly) (interchain with G-Cter in ubiquitin).

It belongs to the histone H2A family. The nucleosome is a histone octamer containing two molecules each of H2A, H2B, H3 and H4 assembled in one H3-H4 heterotetramer and two H2A-H2B heterodimers. The octamer wraps approximately 147 bp of DNA. Post-translationally, monoubiquitination of Lys-121 gives a specific tag for epigenetic transcriptional repression. In terms of processing, phosphorylation on Ser-2 is enhanced during mitosis. Phosphorylation on Ser-2 directly represses transcription.

It is found in the nucleus. The protein resides in the chromosome. Core component of nucleosome. Nucleosomes wrap and compact DNA into chromatin, limiting DNA accessibility to the cellular machineries which require DNA as a template. Histones thereby play a central role in transcription regulation, DNA repair, DNA replication and chromosomal stability. DNA accessibility is regulated via a complex set of post-translational modifications of histones, also called histone code, and nucleosome remodeling. The protein is Histone H2A (his-3) of Caenorhabditis elegans.